A 486-amino-acid chain; its full sequence is Ribulose bisphosphate carboxylase large chain (486 aa).

Substrate is bound by residues Asn126 and Thr176. The active-site Proton acceptor is the Lys178. Lys180 lines the substrate pocket. Residues Lys204, Asp206, and Glu207 each contribute to the Mg(2+) site. An N6-carboxylysine modification is found at Lys204. His296 (proton acceptor) is an active-site residue. Arg297, His329, and Ser381 together coordinate substrate.

The protein belongs to the RuBisCO large chain family. Type I subfamily. In terms of assembly, heterohexadecamer of 8 large chains and 8 small chains. Mg(2+) is required as a cofactor.

The catalysed reaction is 2 (2R)-3-phosphoglycerate + 2 H(+) = D-ribulose 1,5-bisphosphate + CO2 + H2O. The enzyme catalyses D-ribulose 1,5-bisphosphate + O2 = 2-phosphoglycolate + (2R)-3-phosphoglycerate + 2 H(+). RuBisCO catalyzes two reactions: the carboxylation of D-ribulose 1,5-bisphosphate, the primary event in carbon dioxide fixation, as well as the oxidative fragmentation of the pentose substrate. Both reactions occur simultaneously and in competition at the same active site. The polypeptide is Ribulose bisphosphate carboxylase large chain (Sinorhizobium medicae (strain WSM419) (Ensifer medicae)).